A 158-amino-acid chain; its full sequence is Snaclec stejaggregin-A subunit alpha (158 aa).

Positions 1-23 are cleaved as a signal peptide; it reads MGRFISVSFGLLVVFLSLSGTGA. Cystine bridges form between cysteine 27/cysteine 38, cysteine 55/cysteine 152, and cysteine 127/cysteine 144. In terms of domain architecture, C-type lectin spans 34-153; that stretch reads YDWYCYKPFN…CQAKNPFVCK (120 aa).

The protein belongs to the snaclec family. Heteromultimer; disulfide-linked. In terms of tissue distribution, expressed by the venom gland.

Its subcellular location is the secreted. Its function is as follows. Interferes with one step of hemostasis (modulation of platelet aggregation, or coagulation cascade, for example). The polypeptide is Snaclec stejaggregin-A subunit alpha (Trimeresurus stejnegeri (Chinese green tree viper)).